We begin with the raw amino-acid sequence, 440 residues long: P47(GAG-CRK) protein (440 aa).

The segment at Met-1–Ala-208 is gag first part. Positions Pro-174–Tyr-177 match the PPXY motif motif. Residues Tyr-183–Ala-230 are disordered. The segment at Gly-209–Thr-437 is CRK. Over residues Ala-212 to Ala-221 the composition is skewed to basic residues. The 107-residue stretch at Trp-248–Val-354 folds into the SH2 domain. The SH3 domain maps to Glu-368–Pro-428. The tract at residues Gly-438–Arg-440 is gag second part.

This is P47(GAG-CRK) protein from Avian sarcoma virus CT10 (Avian sarcoma virus (strain CT10)).